A 166-amino-acid polypeptide reads, in one-letter code: Small ribosomal subunit protein uS5 (166 aa).

The region spanning 11 to 74 (LQEKLIAVNR…EQAKRNLSKV (64 aa)) is the S5 DRBM domain.

Belongs to the universal ribosomal protein uS5 family. Part of the 30S ribosomal subunit. Contacts proteins S4 and S8.

Its function is as follows. With S4 and S12 plays an important role in translational accuracy. In terms of biological role, located at the back of the 30S subunit body where it stabilizes the conformation of the head with respect to the body. The chain is Small ribosomal subunit protein uS5 from Aeromonas salmonicida (strain A449).